Here is a 156-residue protein sequence, read N- to C-terminus: Protein CROC-4 (156 aa).

The disordered stretch occupies residues 46–71; sequence RATSSTTDSSRAPSSPRPPGSTSHCG. Residues 48 to 59 are compositionally biased toward low complexity; it reads TSSTTDSSRAPS.

In terms of tissue distribution, expressed throughout the brain in the thalamus, subthalamic nucleus, corpus callosum, hippocampus, substantia nigra, caudate nucleus, and amygdala.

It localises to the nucleus. May play a role in FOS signaling pathways involved in development and remodeling of neurons. Promotes transcription of the FOS promoter. In Homo sapiens (Human), this protein is Protein CROC-4.